The chain runs to 781 residues: Putative UPF0313 protein YPO0674/y3502/YP_2990 (781 aa).

The Radical SAM core domain occupies 368-646 (AYDMIRFSIN…KALLRYHDPA (279 aa)). [4Fe-4S] cluster is bound by residues Cys-382, Cys-386, and Cys-389. The interval 681–781 (REARRALRHH…AGSRGKNRQH (101 aa)) is disordered. Positions 696–708 (KHTSITRQRQPSN) are enriched in polar residues. A compositionally biased stretch (low complexity) spans 726-750 (TSSAHSTSANQSTSANQSTSAAHST).

It belongs to the UPF0313 family. Requires [4Fe-4S] cluster as cofactor.

This chain is Putative UPF0313 protein YPO0674/y3502/YP_2990, found in Yersinia pestis.